The following is a 549-amino-acid chain: Chaperonin GroEL 2 (549 aa).

ATP is bound by residues 29-32, Lys-50, 86-90, Gly-414, 477-479, and Asp-493; these read TLGP, DGTTT, and NAA.

It belongs to the chaperonin (HSP60) family. Forms a cylinder of 14 subunits composed of two heptameric rings stacked back-to-back. Interacts with the co-chaperonin GroES.

Its subcellular location is the cytoplasm. It catalyses the reaction ATP + H2O + a folded polypeptide = ADP + phosphate + an unfolded polypeptide.. Functionally, together with its co-chaperonin GroES, plays an essential role in assisting protein folding. The GroEL-GroES system forms a nano-cage that allows encapsulation of the non-native substrate proteins and provides a physical environment optimized to promote and accelerate protein folding. The chain is Chaperonin GroEL 2 from Myxococcus xanthus (strain DK1622).